A 475-amino-acid chain; its full sequence is MASCRMGARSALEPCQVDCLDEAADERCAETPRCHAELLESVTGASRMSRYSIIVLDPIGTIRAAEALTALVDADDVIFKDEDPLKGIRSVFELGDLDPTNHEEIEFQGGALGRFAYDIARRLEAIRDLGDRELAGPDAGTALYDLILYDHQDDVIWILVPNEAGEQDPSEDFRDLVNAWSYDDEFDIGAEFGANYTDDAYADGVDRLKDYLGSGDMYQVNLAQRRVGMISAEDYQLYIRLRDANPAPYMAYLDIDEGLLVASPERIILDEASDLDTRPIAGTLRGRPRAGGDDEDDGRAIDLLRVDKDRAERIMIVDLDRNDIARVGVGGSVKVREIMGLERYSGVMHLVSQVTGDLQEAIEAVDLIRAGFPGGTLTGAPKVRTMEIIDELEPQRRAAYCGSIGYIAYKGNIDFKIAIPTLYALAGQLFCQAGGGVVGDSVPDGEYRESFEKGNALIRGLEIRHGAVVAQSEDK.

It belongs to the anthranilate synthase component I family. Monomer. Heterodimer consisting of two non-identical subunits: a glutamine amidotransferase subunit (PabA) and a aminodeoxychorismate synthase subunit (PabB). Requires Mg(2+) as cofactor.

The catalysed reaction is chorismate + L-glutamine = 4-amino-4-deoxychorismate + L-glutamate. It functions in the pathway cofactor biosynthesis; tetrahydrofolate biosynthesis; 4-aminobenzoate from chorismate: step 1/2. In terms of biological role, part of a heterodimeric complex that catalyzes the two-step biosynthesis of 4-amino-4-deoxychorismate (ADC), a precursor of p-aminobenzoate (PABA) and tetrahydrofolate. In the first step, a glutamine amidotransferase (PabA) generates ammonia as a substrate that, along with chorismate, is used in the second step, catalyzed by aminodeoxychorismate synthase (PabB) to produce ADC. The chain is Aminodeoxychorismate synthase component 1 (pabB) from Streptomyces lividans.